The sequence spans 400 residues: Mu-type opioid receptor (400 aa).

The Extracellular portion of the chain corresponds to 1-68 (MDSSAAPTNA…CPPTGSPSMI (68 aa)). Asn-9, Asn-12, Asn-33, Asn-40, and Asn-48 each carry an N-linked (GlcNAc...) asparagine glycan. Residues 69-93 (TAITIMALYSIVCVVGLFGNFLVMY) traverse the membrane as a helical segment. The Cytoplasmic portion of the chain corresponds to 94 to 106 (VIVRYTKMKTATN). Residues 107-131 (IYIFNLALADALATSTLPFQSVNYL) traverse the membrane as a helical segment. Over 132–142 (MGTWPFGTILC) the chain is Extracellular. A disulfide bridge links Cys-142 with Cys-219. The chain crosses the membrane as a helical span at residues 143 to 165 (KIVISIDYYNMFTSIFTLCTMSV). At 166–185 (DRYIAVCHPVKALDFRTPRN) the chain is on the cytoplasmic side. At Tyr-168 the chain carries Phosphotyrosine. A helical transmembrane segment spans residues 186–207 (AKIINVCNWILSSAIGLPVMFM). Residues 208–230 (ATTKYRQGSIDCTLTFSHPTWYW) lie on the Extracellular side of the membrane. A helical transmembrane segment spans residues 231–255 (ENLLKICVFIFAFIMPVLIITVCYG). The Cytoplasmic portion of the chain corresponds to 256–279 (LMILRLKSVRMLSGSKEKDRNLRR). The chain crosses the membrane as a helical span at residues 280 to 306 (ITRMVLVVVAVFIVCWTPIHIYVIIKA). The Extracellular segment spans residues 307-314 (LVTIPETT). The helical transmembrane segment at 315–338 (FQTVSWHFCIALGYTNSCLNPVLY) threads the bilayer. Residues 334-338 (NPVLY) carry the NPxxY; plays a role in stabilizing the activated conformation of the receptor motif. The Cytoplasmic portion of the chain corresponds to 339–400 (AFLDENFKRC…NLEAETAPLP (62 aa)). Residue Cys-353 is the site of S-palmitoyl cysteine attachment. Ser-365 is modified (phosphoserine). Residue Thr-372 is modified to Phosphothreonine. Ser-377 is subject to Phosphoserine. At Thr-396 the chain carries Phosphothreonine.

It belongs to the G-protein coupled receptor 1 family. Forms homooligomers and heterooligomers with other GPCRs, such as OPRD1, OPRK1, OPRL1, NPFFR2, ADRA2A, SSTR2, CNR1 and CCR5 (probably in dimeric forms). Interacts with heterotrimeric G proteins; interaction with a heterotrimeric complex containing GNAI1, GNB1 and GNG2 stabilizes the active conformation of the receptor and increases its affinity for endomorphin-2, the synthetic opioid peptide DAMGO and for morphinan agonists. Interacts with PPL; the interaction disrupts agonist-mediated G-protein activation. Interacts (via C-terminus) with DNAJB4 (via C-terminus). Interacts with calmodulin; the interaction inhibits the constitutive activity of OPRM1; it abolishes basal and attenuates agonist-stimulated G-protein coupling. Interacts with FLNA, PLD2, RANBP9 and WLS and GPM6A. Interacts with RTP4. Interacts with SYP and GNAS. Interacts with RGS9, RGS17, RGS20, RGS4, PPP1R9B and HINT1. In terms of processing, phosphorylated. Differentially phosphorylated in basal and agonist-induced conditions. Agonist-mediated phosphorylation modulates receptor internalization. Phosphorylated by GRK2 in a agonist-dependent manner. Phosphorylation at Tyr-168 requires receptor activation, is dependent on non-receptor protein tyrosine kinase Src and results in a decrease in agonist efficacy by reducing G-protein coupling efficiency. Phosphorylated on tyrosine residues; the phosphorylation is involved in agonist-induced G-protein-independent receptor down-regulation. Phosphorylation at Ser-377 is involved in G-protein-dependent but not beta-arrestin-dependent activation of the ERK pathway. Post-translationally, ubiquitinated. A basal ubiquitination seems not to be related to degradation. Ubiquitination is increased upon formation of OPRM1:OPRD1 oligomers leading to proteasomal degradation; the ubiquitination is diminished by RTP4. As to expression, expressed in brain. Isoform 16 and isoform 17 are detected in brain.

It localises to the cell membrane. Its subcellular location is the cell projection. It is found in the axon. The protein resides in the perikaryon. The protein localises to the dendrite. It localises to the endosome. Its subcellular location is the cytoplasm. Receptor for endogenous opioids such as beta-endorphin and endomorphin. Receptor for natural and synthetic opioids including morphine, heroin, DAMGO, fentanyl, etorphine, buprenorphin and methadone. Also activated by enkephalin peptides, such as Met-enkephalin or Met-enkephalin-Arg-Phe, with higher affinity for Met-enkephalin-Arg-Phe. Agonist binding to the receptor induces coupling to an inactive GDP-bound heterotrimeric G-protein complex and subsequent exchange of GDP for GTP in the G-protein alpha subunit leading to dissociation of the G-protein complex with the free GTP-bound G-protein alpha and the G-protein beta-gamma dimer activating downstream cellular effectors. The agonist- and cell type-specific activity is predominantly coupled to pertussis toxin-sensitive G(i) and G(o) G alpha proteins, GNAI1, GNAI2, GNAI3 and GNAO1 isoforms Alpha-1 and Alpha-2, and to a lesser extent to pertussis toxin-insensitive G alpha proteins GNAZ and GNA15. They mediate an array of downstream cellular responses, including inhibition of adenylate cyclase activity and both N-type and L-type calcium channels, activation of inward rectifying potassium channels, mitogen-activated protein kinase (MAPK), phospholipase C (PLC), phosphoinositide/protein kinase (PKC), phosphoinositide 3-kinase (PI3K) and regulation of NF-kappa-B. Also couples to adenylate cyclase stimulatory G alpha proteins. The selective temporal coupling to G-proteins and subsequent signaling can be regulated by RGSZ proteins, such as RGS9, RGS17 and RGS4. Phosphorylation by members of the GPRK subfamily of Ser/Thr protein kinases and association with beta-arrestins is involved in short-term receptor desensitization. Beta-arrestins associate with the GPRK-phosphorylated receptor and uncouple it from the G-protein thus terminating signal transduction. The phosphorylated receptor is internalized through endocytosis via clathrin-coated pits which involves beta-arrestins. The activation of the ERK pathway occurs either in a G-protein-dependent or a beta-arrestin-dependent manner and is regulated by agonist-specific receptor phosphorylation. Acts as a class A G-protein coupled receptor (GPCR) which dissociates from beta-arrestin at or near the plasma membrane and undergoes rapid recycling. Receptor down-regulation pathways are varying with the agonist and occur dependent or independent of G-protein coupling. Endogenous ligands induce rapid desensitization, endocytosis and recycling. Heterooligomerization with other GPCRs can modulate agonist binding, signaling and trafficking properties. Its function is as follows. Couples to GNAS and is proposed to be involved in excitatory effects. Functionally, does not bind agonists but may act through oligomerization with binding-competent OPRM1 isoforms and reduce their ligand binding activity. This chain is Mu-type opioid receptor (OPRM1), found in Homo sapiens (Human).